Reading from the N-terminus, the 444-residue chain is uncharacterized protein (444 aa).

12 helical membrane passes run 2–22, 24–44, 52–72, 106–126, 134–154, 174–194, 228–248, 261–281, 305–325, 343–363, 377–397, and 424–444; these read PILI…KVKL, TFVS…MDIN, TGIG…AMLG, FIIG…PIVY, MPFL…HGFL, VLLF…PLFN, FAIS…ATIF, IIEF…LALY, IAMM…LIDG, LFVA…ATVA, AGSV…VIAC, and LLTT…GLVM.

The protein belongs to the GntP permease family.

It localises to the cell membrane. This is an uncharacterized protein from Bacillus subtilis (strain 168).